A 565-amino-acid polypeptide reads, in one-letter code: MAKLWFKFQRYFRRKPVRFFTFLALYLTAGSLVFLHSGFVGQPAVSGNQANPAAAGGPAEGAELSFLGDMHLGRGFRDTGEASSIARRYGPWFKGKDGNERAKLGDYGGAWSRALKGRVVREKEEERAKYIGCYLDDTQSRALRGVSFFDYKKMTIFRCQDNCAERGYLYGGLEFGAECYCGHKIQATNVSEAECDMECKGERGSVCGGANRLSVYRLQLAQESARRYGSAVFRGCFRRPDNLSLALPVTAAMLNMSVDKCVDFCTEKEYPLAALAGTACHCGFPTTRFPLHDREDEQLCAQKCSAEEFESCGTPSYFIVYQTQVQDNRCMDRRFLPGKSKQLIALASFPGAGNTWARHLIELATGFYTGSYYFDGSLYNKGFKGERDHWRSGRTICIKTHESGQKEIEAFDAAILLIRNPYKALMAEFNRKYGGHIGFAAHAHWKGKEWPEFVRNYAPWWATHTLDWLKFGKKVLVVHFEDLKQDLFVQLGRMVSLLGVAVREDRLLCVESQKDGNFKRSGLRKLEYDPYTADMQKTISAYIKMVDAALKGRNLTGVPDDYYPR.

Topologically, residues Met-1 to Arg-18 are cytoplasmic. The helical; Signal-anchor for type II membrane protein transmembrane segment at Phe-19–Gly-41 threads the bilayer. Topologically, residues Gln-42–Arg-565 are extracellular. 2 consecutive WSC domains span residues Arg-127 to Gln-219 and Ser-230 to Gln-324. N-linked (GlcNAc...) asparagine glycosylation is found at Asn-189 and Asn-242.

Belongs to the WSCD family.

Its subcellular location is the golgi apparatus membrane. Functionally, sialate:O-sulfotransferase which catalyzes 8-O-sulfation at the Sia-glycan level using 3'-phosphoadenosine 5'-phosphosulfate (PAPS) as a donor, forming 8-O-sulfated Sia (Sia8S)-glycans. Displays selectivity toward glycoproteins such as TF/transferrin. This chain is Sialate:O-sulfotransferase 2 (WSCD2), found in Homo sapiens (Human).